Here is a 633-residue protein sequence, read N- to C-terminus: Probable extracellular metalloproteinase 5 (633 aa).

Positions 1-20 are cleaved as a signal peptide; sequence MHGLLLAAAGLLSLPLHVLA. Positions 21 to 244 are excised as a propeptide; sequence HPQPSTNLAG…VHNVVDYVSH (224 aa). N-linked (GlcNAc...) asparagine glycosylation occurs at asparagine 285. Histidine 428 contributes to the Zn(2+) binding site. Residue glutamate 429 is part of the active site. Histidine 432 contributes to the Zn(2+) binding site. N-linked (GlcNAc...) asparagine glycosylation is found at asparagine 592 and asparagine 621.

This sequence belongs to the peptidase M36 family. Zn(2+) serves as cofactor.

It localises to the secreted. Functionally, secreted metalloproteinase probably acting as a virulence factor. This Trichophyton verrucosum (strain HKI 0517) protein is Probable extracellular metalloproteinase 5 (MEP5).